Here is a 143-residue protein sequence, read N- to C-terminus: Ribonuclease H (143 aa).

The 141-residue stretch at 1–141 folds into the RNase H type-1 domain; sequence MKHVEIFTDG…VDKLASDAAL (141 aa). Residues aspartate 9, glutamate 47, aspartate 69, and aspartate 133 each contribute to the Mg(2+) site.

The protein belongs to the RNase H family. Monomer. It depends on Mg(2+) as a cofactor.

It localises to the cytoplasm. The catalysed reaction is Endonucleolytic cleavage to 5'-phosphomonoester.. Endonuclease that specifically degrades the RNA of RNA-DNA hybrids. In Novosphingobium aromaticivorans (strain ATCC 700278 / DSM 12444 / CCUG 56034 / CIP 105152 / NBRC 16084 / F199), this protein is Ribonuclease H.